Here is a 484-residue protein sequence, read N- to C-terminus: Transcription factor TGAL4 (484 aa).

The segment covering 1-11 (MGEASSSSGHP) has biased composition (polar residues). Disordered stretches follow at residues 1–22 (MGEA…GYGF), 84–137 (ATAA…NASS), and 155–181 (QQEQ…DPKT). Over residues 123-137 (SESSSKNNSNQNASS) the composition is skewed to low complexity. Residues 163–173 (ATNSPTHSSKT) show a composition bias toward polar residues. The bZIP domain occupies 178 to 222 (DPKTMRRLAQNREAARKSRLRKKAYIQQLESSKLKLAQMEQDIHR). The basic motif stretch occupies residues 180–200 (KTMRRLAQNREAARKSRLRKK). The segment at 206–220 (LESSKLKLAQMEQDI) is leucine-zipper. Residues 241–455 (AAMFDVDYAR…RALSSLWASR (215 aa)) form the DOG1 domain.

Belongs to the bZIP family. Interacts with NPR1/NH1 and NPR3/NH3.

The protein localises to the nucleus. In terms of biological role, transcriptional regulator involved in defense response. This Oryza sativa subsp. japonica (Rice) protein is Transcription factor TGAL4.